Consider the following 343-residue polypeptide: L-threonine 3-dehydrogenase (343 aa).

Cys-38 lines the Zn(2+) pocket. Catalysis depends on charge relay system residues Thr-40 and His-43. 6 residues coordinate Zn(2+): His-63, Glu-64, Cys-93, Cys-96, Cys-99, and Cys-107. NAD(+) is bound by residues Ile-175, Asp-195, Arg-200, 262–264 (LGI), and 286–287 (IY).

It belongs to the zinc-containing alcohol dehydrogenase family. As to quaternary structure, homotetramer. Zn(2+) serves as cofactor.

The protein localises to the cytoplasm. It catalyses the reaction L-threonine + NAD(+) = (2S)-2-amino-3-oxobutanoate + NADH + H(+). It functions in the pathway amino-acid degradation; L-threonine degradation via oxydo-reductase pathway; glycine from L-threonine: step 1/2. Its function is as follows. Catalyzes the NAD(+)-dependent oxidation of L-threonine to 2-amino-3-ketobutyrate. This is L-threonine 3-dehydrogenase from Pectobacterium carotovorum subsp. carotovorum (strain PC1).